Consider the following 205-residue polypeptide: Large ribosomal subunit protein uL13 (205 aa).

This sequence belongs to the universal ribosomal protein uL13 family.

This chain is Large ribosomal subunit protein uL13 (RpL13A), found in Drosophila melanogaster (Fruit fly).